The primary structure comprises 435 residues: Adenylosuccinate synthetase (435 aa).

Residues 12 to 18 (GDEGKGK) and 40 to 42 (GHT) contribute to the GTP site. The active-site Proton acceptor is the Asp13. Positions 13 and 40 each coordinate Mg(2+). IMP-binding positions include 13–16 (DEGK), 38–41 (NAGH), Thr130, Arg144, Gln224, Thr239, and Arg301. His41 (proton donor) is an active-site residue. 297–303 (TVSNRKR) lines the substrate pocket. GTP contacts are provided by residues Arg303, 329-331 (KLD), and 411-413 (SAG).

This sequence belongs to the adenylosuccinate synthetase family. In terms of assembly, homodimer. Mg(2+) is required as a cofactor.

Its subcellular location is the cytoplasm. The catalysed reaction is IMP + L-aspartate + GTP = N(6)-(1,2-dicarboxyethyl)-AMP + GDP + phosphate + 2 H(+). It functions in the pathway purine metabolism; AMP biosynthesis via de novo pathway; AMP from IMP: step 1/2. Functionally, plays an important role in the de novo pathway of purine nucleotide biosynthesis. Catalyzes the first committed step in the biosynthesis of AMP from IMP. The chain is Adenylosuccinate synthetase from Wolbachia sp. subsp. Brugia malayi (strain TRS).